Here is a 194-residue protein sequence, read N- to C-terminus: Erythropoietin (194 aa).

The first 26 residues, 1–26 (MGARECPARLLLLSLLLLPLGLPVLG), serve as a signal peptide directing secretion. Cystine bridges form between Cys-33–Cys-189 and Cys-55–Cys-59. A glycan (N-linked (GlcNAc...) asparagine) is linked at Asn-50. 3 N-linked (GlcNAc...) asparagine glycosylation sites follow: Asn-64, Asn-109, and Asn-172.

Belongs to the EPO/TPO family. In terms of tissue distribution, produced by kidney or liver of adult mammals and by liver of fetal or neonatal mammals.

Its subcellular location is the secreted. In terms of biological role, hormone involved in the regulation of erythrocyte proliferation and differentiation and the maintenance of a physiological level of circulating erythrocyte mass. Binds to EPOR leading to EPOR dimerization and JAK2 activation thereby activating specific downstream effectors, including STAT1 and STAT3. This Sus scrofa (Pig) protein is Erythropoietin (EPO).